The sequence spans 382 residues: Na(+)/H(+) antiporter NhaA 2 (382 aa).

12 helical membrane passes run 7–27, 28–48, 52–72, 88–108, 118–138, 147–167, 170–190, 206–226, 254–274, 285–305, 325–345, and 356–376; these read AGGV…NSYL, SGFY…AFEI, LLLW…GLEV, VLPG…YASF, GWAI…SLFG, LFLL…IALF, HELS…LFVL, LVVW…GFVI, VAYF…LGGI, LGII…VCWL, GVCL…SLAF, and VKLG…LILT.

It belongs to the NhaA Na(+)/H(+) (TC 2.A.33) antiporter family.

It localises to the cell inner membrane. It catalyses the reaction Na(+)(in) + 2 H(+)(out) = Na(+)(out) + 2 H(+)(in). Na(+)/H(+) antiporter that extrudes sodium in exchange for external protons. The sequence is that of Na(+)/H(+) antiporter NhaA 2 from Saccharophagus degradans (strain 2-40 / ATCC 43961 / DSM 17024).